Reading from the N-terminus, the 123-residue chain is MIQERTILNVADNSGARFAMCIKVLGGSKRRYANIGDVIKVTVKEAIPKAKVKKGDVLQAVIVRTKKGIRRIDGSIIRFDNNACVLLNDTNMQPLGTRIFGPVTRELRYANFVRIISLAPEVL.

Belongs to the universal ribosomal protein uL14 family. As to quaternary structure, part of the 50S ribosomal subunit. Forms a cluster with proteins L3 and L19. In the 70S ribosome, L14 and L19 interact and together make contacts with the 16S rRNA in bridges B5 and B8.

Functionally, binds to 23S rRNA. Forms part of two intersubunit bridges in the 70S ribosome. The chain is Large ribosomal subunit protein uL14 from Blochmanniella floridana.